We begin with the raw amino-acid sequence, 173 residues long: Mediator of RNA polymerase II transcription subunit 10 (173 aa).

A compositionally biased stretch (low complexity) spans 1-10 (MVQQQQQSQQ). The disordered stretch occupies residues 1-42 (MVQQQQQSQQRMMELHERNDREKLARKTEKEREEERRKQEDD). The segment covering 13 to 42 (MELHERNDREKLARKTEKEREEERRKQEDD) has biased composition (basic and acidic residues).

This sequence belongs to the Mediator complex subunit 10 family. In terms of assembly, component of the Mediator complex.

It is found in the nucleus. Functionally, component of the Mediator complex, a coactivator involved in the regulated transcription of nearly all RNA polymerase II-dependent genes. Mediator functions as a bridge to convey information from gene-specific regulatory proteins to the basal RNA polymerase II transcription machinery. Mediator is recruited to promoters by direct interactions with regulatory proteins and serves as a scaffold for the assembly of a functional preinitiation complex with RNA polymerase II and the general transcription factors. Required for germ cell development and for transcriptional activation of certain stage-specific inducible promoters. This Caenorhabditis elegans protein is Mediator of RNA polymerase II transcription subunit 10 (mdt-10).